Reading from the N-terminus, the 655-residue chain is Large subunit GTPase 1 homolog (655 aa).

Positions 1–31 (MGRRRAPGGGSLGRVLIRHQTQRSRSHRHTD) are disordered. Residues 16 to 28 (LIRHQTQRSRSHR) are compositionally biased toward basic residues. 2 positions are modified to phosphoserine: S93 and S97. Residues 164–441 (WRQLWRVIER…LCDCPGLVMP (278 aa)) enclose the CP-type G domain. 212–215 (NKAD) lines the GTP pocket. S252 bears the Phosphoserine mark. The tract at residues 253-359 (KDEVNSVAGE…ENSQMSNKSH (107 aa)) is disordered. Over residues 288-327 (EESESDDDDSEYEDCQEDEEEDWQTCSEEDSNPEEGQEEG) the composition is skewed to acidic residues. Positions 328–339 (GCDRDQKEHGPE) are enriched in basic and acidic residues. Polar residues predominate over residues 344–359 (QSRASPENSQMSNKSH). GTP-binding positions include 390–397 (GYPNVGKS) and 434–437 (DCPG). A disordered region spans residues 625–655 (SAENVPGKPWKKHGNRNKKEKSRRLYRHLDV). Residues 633 to 655 (PWKKHGNRNKKEKSRRLYRHLDV) are compositionally biased toward basic residues.

This sequence belongs to the TRAFAC class YlqF/YawG GTPase family. LSG1 subfamily.

Its subcellular location is the cytoplasm. The protein localises to the endoplasmic reticulum. It localises to the nucleus. It is found in the cajal body. It catalyses the reaction GTP + H2O = GDP + phosphate + H(+). Functions as a GTPase. May act by mediating the release of NMD3 from the 60S ribosomal subunit after export into the cytoplasm during the 60S ribosomal subunit maturation. The polypeptide is Large subunit GTPase 1 homolog (Rattus norvegicus (Rat)).